A 210-amino-acid polypeptide reads, in one-letter code: Putative protein-lysine deacylase ABHD14B (210 aa).

The residue at position 2 (A2) is an N-acetylalanine. S91 carries the phosphoserine modification. Residues S111, D162, and H188 each act as charge relay system in the active site.

Belongs to the AB hydrolase superfamily. ABHD14 family. In terms of assembly, may interact with TAF1.

It localises to the cytoplasm. The protein localises to the nucleus. It carries out the reaction L-lysyl-[protein] + acetyl-CoA = N(6)-acetyl-L-lysyl-[protein] + CoA + H(+). In terms of biological role, acts as an atypical protein-lysine deacetylase in vitro. Catalyzes the deacetylation of lysine residues using CoA as substrate, generating acetyl-CoA and the free amine of protein-lysine residues. Additional experiments are however required to confirm the protein-lysine deacetylase activity in vivo. Has hydrolase activity towards various surrogate p-nitrophenyl (pNp) substrates, such as pNp-butyrate, pNp-acetate and pNp-octanoate in vitro, with a strong preference for pNp-acetate. May activate transcription. In Pongo abelii (Sumatran orangutan), this protein is Putative protein-lysine deacylase ABHD14B.